A 174-amino-acid polypeptide reads, in one-letter code: Transcription antitermination protein NusB (174 aa).

The tract at residues 1–28 (MVEPKKPFMRKPPPKTGDKKPGDRKANR) is disordered. Positions 16–25 (TGDKKPGDRK) are enriched in basic and acidic residues.

Belongs to the NusB family.

In terms of biological role, involved in transcription antitermination. Required for transcription of ribosomal RNA (rRNA) genes. Binds specifically to the boxA antiterminator sequence of the ribosomal RNA (rrn) operons. This Rhodopseudomonas palustris (strain BisB5) protein is Transcription antitermination protein NusB.